The following is a 691-amino-acid chain: POU domain, class 6, transcription factor 2 (691 aa).

Disordered regions lie at residues 1–61, 188–297, and 435–461; these read MIAG…RGNT, QQQQ…LQLV, and GQAATSHSPVRQASSSSSSSSSSSALS. Basic and acidic residues predominate over residues 17-28; that stretch reads MNAELRGEDKAA. 2 stretches are compositionally biased toward low complexity: residues 188–197 and 206–216; these read QQQQQQQQQQ and QHPQPASQAPP. The segment covering 217-237 has biased composition (pro residues); the sequence is QSQPTPPHQPPPASQQLPAPP. Residues 238 to 272 are compositionally biased toward low complexity; that stretch reads AQLEQATQPQQHQPHSHPQNQTQNQPSPTQQSSSP. Over residues 437–447 the composition is skewed to polar residues; sequence AATSHSPVRQA. Over residues 448–458 the composition is skewed to low complexity; the sequence is SSSSSSSSSSS. The POU-specific domain occupies 476 to 586; the sequence is VDGVNLEEIR…VLERWMAEAE (111 aa). The segment at residues 607-666 is a DNA-binding region (homeobox); it reads KRKRRTSFTPQALEILNAHFEKNTHPSGQEMTEIAEKLNYDREVVRVWFCNKRQALKNTI. Residues 670 to 691 are disordered; sequence KQHEPTSAAPLEPLADSPEENC.

This sequence belongs to the POU transcription factor family. Class-6 subfamily. In terms of tissue distribution, expressed in kidney, heart, muscle, spleen and ovary, but not in lung.

Its subcellular location is the nucleus. Functionally, probable transcription factor likely to be involved in early steps in the differentiation of amacrine and ganglion cells. Recognizes and binds to the DNA sequence 5'-ATGCAAAT-3'. This Mus musculus (Mouse) protein is POU domain, class 6, transcription factor 2 (Pou6f2).